The sequence spans 53 residues: Large ribosomal subunit protein bL32c (53 aa).

The protein belongs to the bacterial ribosomal protein bL32 family.

The protein resides in the plastid. Its subcellular location is the chloroplast. This chain is Large ribosomal subunit protein bL32c (rpl32), found in Guillardia theta (Cryptophyte).